The primary structure comprises 97 residues: Large ribosomal subunit protein uL23 (97 aa).

Belongs to the universal ribosomal protein uL23 family. As to quaternary structure, part of the 50S ribosomal subunit. Contacts protein L29, and trigger factor when it is bound to the ribosome.

One of the early assembly proteins it binds 23S rRNA. One of the proteins that surrounds the polypeptide exit tunnel on the outside of the ribosome. Forms the main docking site for trigger factor binding to the ribosome. In Mesorhizobium japonicum (strain LMG 29417 / CECT 9101 / MAFF 303099) (Mesorhizobium loti (strain MAFF 303099)), this protein is Large ribosomal subunit protein uL23.